Consider the following 392-residue polypeptide: Probable tRNA sulfurtransferase (392 aa).

A THUMP domain is found at 63–169 (GRAADAAADT…DAEAFVFLTH (107 aa)). Residues 187-188 (LV), Arg-270, Gly-292, and Gln-301 contribute to the ATP site.

The protein belongs to the ThiI family.

The protein localises to the cytoplasm. It catalyses the reaction [ThiI sulfur-carrier protein]-S-sulfanyl-L-cysteine + a uridine in tRNA + 2 reduced [2Fe-2S]-[ferredoxin] + ATP + H(+) = [ThiI sulfur-carrier protein]-L-cysteine + a 4-thiouridine in tRNA + 2 oxidized [2Fe-2S]-[ferredoxin] + AMP + diphosphate. The enzyme catalyses [ThiS sulfur-carrier protein]-C-terminal Gly-Gly-AMP + S-sulfanyl-L-cysteinyl-[cysteine desulfurase] + AH2 = [ThiS sulfur-carrier protein]-C-terminal-Gly-aminoethanethioate + L-cysteinyl-[cysteine desulfurase] + A + AMP + 2 H(+). It participates in cofactor biosynthesis; thiamine diphosphate biosynthesis. In terms of biological role, catalyzes the ATP-dependent transfer of a sulfur to tRNA to produce 4-thiouridine in position 8 of tRNAs, which functions as a near-UV photosensor. Also catalyzes the transfer of sulfur to the sulfur carrier protein ThiS, forming ThiS-thiocarboxylate. This is a step in the synthesis of thiazole, in the thiamine biosynthesis pathway. The sulfur is donated as persulfide by IscS. The polypeptide is Probable tRNA sulfurtransferase (Halobacterium salinarum (strain ATCC 29341 / DSM 671 / R1)).